The following is a 357-amino-acid chain: UDP-N-acetylglucosamine--N-acetylmuramyl-(pentapeptide) pyrophosphoryl-undecaprenol N-acetylglucosamine transferase (357 aa).

Residues serine 14–glycine 16, asparagine 125, serine 190, and glutamine 290 contribute to the UDP-N-acetyl-alpha-D-glucosamine site.

The protein belongs to the glycosyltransferase 28 family. MurG subfamily.

It is found in the cell inner membrane. It catalyses the reaction di-trans,octa-cis-undecaprenyl diphospho-N-acetyl-alpha-D-muramoyl-L-alanyl-D-glutamyl-meso-2,6-diaminopimeloyl-D-alanyl-D-alanine + UDP-N-acetyl-alpha-D-glucosamine = di-trans,octa-cis-undecaprenyl diphospho-[N-acetyl-alpha-D-glucosaminyl-(1-&gt;4)]-N-acetyl-alpha-D-muramoyl-L-alanyl-D-glutamyl-meso-2,6-diaminopimeloyl-D-alanyl-D-alanine + UDP + H(+). It functions in the pathway cell wall biogenesis; peptidoglycan biosynthesis. Its function is as follows. Cell wall formation. Catalyzes the transfer of a GlcNAc subunit on undecaprenyl-pyrophosphoryl-MurNAc-pentapeptide (lipid intermediate I) to form undecaprenyl-pyrophosphoryl-MurNAc-(pentapeptide)GlcNAc (lipid intermediate II). The protein is UDP-N-acetylglucosamine--N-acetylmuramyl-(pentapeptide) pyrophosphoryl-undecaprenol N-acetylglucosamine transferase of Chlamydia felis (strain Fe/C-56) (Chlamydophila felis).